We begin with the raw amino-acid sequence, 1021 residues long: Ephrin type-B receptor 6 (1021 aa).

The signal sequence occupies residues 1 to 31 (MATEGAAQLGNRVAGMVCSLWVLLLVSSVLA). Topologically, residues 32–594 (LEEVLLDTTG…LSSQLPERLS (563 aa)) are extracellular. The Eph LBD domain occupies 33–237 (EEVLLDTTGE…FSYTCPAVLR (205 aa)). The segment at 163–182 (SFPSSSSSSSSSSSAAWAVG) is disordered. Residues 166-176 (SSSSSSSSSSS) are compositionally biased toward low complexity. Fibronectin type-III domains are found at residues 369-486 (PPSA…TSHE) and 487-582 (VPSA…TLPQ). N-linked (GlcNAc...) asparagine glycosylation occurs at Asn-480. A helical transmembrane segment spans residues 595-615 (LVIGSILGALAFLLLAAITVL). Residues 616–1021 (AVVFQRKRRG…HLRQQGSVEV (406 aa)) lie on the Cytoplasmic side of the membrane. The 250-residue stretch at 670–919 (IKIEEVIGTG…QLVAAFDKMI (250 aa)) folds into the Protein kinase domain. ATP is bound at residue 676 to 684 (IGTGSFGEV). One can recognise an SAM domain in the interval 948–1012 (PCLDSPQAWL…LHHIQLLQQH (65 aa)). The PDZ-binding signature appears at 1019–1021 (VEV).

The protein belongs to the protein kinase superfamily. Tyr protein kinase family. Ephrin receptor subfamily. Interacts with CBL and EPHB1. Interacts with FYN; this interaction takes place in a ligand-independent manner. Ligand-binding increases phosphorylation on tyrosine residues. Phosphorylation on tyrosine residues is mediated by transphosphorylation by the catalytically active EPHB1 in a ligand-independent manner. Tyrosine phosphorylation of the receptor may act as a switch on the functional transition from cell adhesion/attraction to de-adhesion/repulsion. Expressed in brain. Expressed in non invasive breast carcinoma cell lines (at protein level). Strong expression in brain and pancreas, and weak expression in other tissues, such as heart, placenta, lung, liver, skeletal muscle and kidney. Expressed in breast non invasive tumors but not in metastatic lesions. Isoform 3 is expressed in cell lines of glioblastomas, anaplastic astrocytomas, gliosarcomas and astrocytomas. Isoform 3 is not detected in normal tissues.

It localises to the membrane. The protein localises to the secreted. Functionally, kinase-defective receptor for members of the ephrin-B family. Binds to ephrin-B1 and ephrin-B2. Modulates cell adhesion and migration by exerting both positive and negative effects upon stimulation with ephrin-B2. Inhibits JNK activation, T-cell receptor-induced IL-2 secretion and CD25 expression upon stimulation with ephrin-B2. In Homo sapiens (Human), this protein is Ephrin type-B receptor 6 (EPHB6).